The sequence spans 397 residues: Lysophospholipid transporter LplT (397 aa).

Residues 1–17 lie on the Periplasmic side of the membrane; it reads MSESVHTNTSLWSKGMK. A helical membrane pass occupies residues 18–38; sequence AVIVAQFLSAFGDNALLFATL. Over 39–52 the chain is Cytoplasmic; sequence ALLKAQFYPEWSQP. A helical membrane pass occupies residues 53-73; the sequence is ILQMVFVGAYILFAPFVGQVA. The Periplasmic segment spans residues 74–90; that stretch reads DSFAKGRVMMFANGLKL. A helical membrane pass occupies residues 91-111; the sequence is LGAASICFGINPFLGYTLVGV. Residues 112–144 lie on the Cytoplasmic side of the membrane; sequence GAAAYSPAKYGILGELTTGSKLVKANGLMEAST. A helical membrane pass occupies residues 145–165; sequence IAAILLGSVAGGVLADWHVLV. Alanine 166 is a topological domain (periplasmic). A helical transmembrane segment spans residues 167–187; that stretch reads LAACALAYGGAVVANIYIPKL. Over 188-226 the chain is Cytoplasmic; the sequence is AAARPGQSWNLINMTRSFLNACTSLWRNGETRFSLVGTS. The helical transmembrane segment at 227-247 threads the bilayer; that stretch reads LFWGAGVTLRFLLVLWVPVAL. The Periplasmic portion of the chain corresponds to 248–256; sequence GITDNATPT. Residues 257-277 form a helical membrane-spanning segment; the sequence is YLNAMVAIGIVVGAGAAAKLV. Residues 278–280 are Cytoplasmic-facing; the sequence is TLE. Residues 281 to 301 traverse the membrane as a helical segment; sequence TVSRCMPAGILIGVVVLIFSL. Residues 302 to 304 are Periplasmic-facing; the sequence is QHE. Residues 305–325 traverse the membrane as a helical segment; the sequence is LLPAYALLMLIGVLGGFFVVP. Over 326–343 the chain is Cytoplasmic; the sequence is LNALLQERGKKSVGAGNA. The helical transmembrane segment at 344 to 364 threads the bilayer; it reads IAVQNLGENSAMLLMLGIYSL. At 365–366 the chain is on the periplasmic side; it reads AV. The helical transmembrane segment at 367–387 threads the bilayer; the sequence is MVGIPVVPIGIGFGTLFALAI. Over 388–397 the chain is Cytoplasmic; sequence TALWIWQRRH.

It belongs to the major facilitator superfamily. LplT (TC 2.A.1.42) family.

It localises to the cell inner membrane. In terms of biological role, catalyzes the facilitated diffusion of 2-acyl-glycero-3-phosphoethanolamine (2-acyl-GPE) into the cell. The chain is Lysophospholipid transporter LplT from Escherichia coli O9:H4 (strain HS).